The sequence spans 419 residues: Tyrosine--tRNA ligase 2 (419 aa).

Tyrosine 34 is an L-tyrosine binding site. A 'HIGH' region motif is present at residues 39–48 (PTGDSMHIGH). Positions 168 and 172 each coordinate L-tyrosine. The 'KMSKS' region motif lies at 230–234 (KFGKS). Lysine 233 serves as a coordination point for ATP. The region spanning 352 to 418 (KNIVEWLVDL…GKKNYSLVKL (67 aa)) is the S4 RNA-binding domain.

The protein belongs to the class-I aminoacyl-tRNA synthetase family. TyrS type 1 subfamily. In terms of assembly, homodimer.

Its subcellular location is the cytoplasm. The enzyme catalyses tRNA(Tyr) + L-tyrosine + ATP = L-tyrosyl-tRNA(Tyr) + AMP + diphosphate + H(+). Catalyzes the attachment of tyrosine to tRNA(Tyr) in a two-step reaction: tyrosine is first activated by ATP to form Tyr-AMP and then transferred to the acceptor end of tRNA(Tyr). The chain is Tyrosine--tRNA ligase 2 from Bacillus thuringiensis subsp. konkukian (strain 97-27).